The chain runs to 153 residues: Endoribonuclease YbeY (153 aa).

3 residues coordinate Zn(2+): histidine 116, histidine 120, and histidine 126.

Belongs to the endoribonuclease YbeY family. The cofactor is Zn(2+).

The protein localises to the cytoplasm. Functionally, single strand-specific metallo-endoribonuclease involved in late-stage 70S ribosome quality control and in maturation of the 3' terminus of the 16S rRNA. The sequence is that of Endoribonuclease YbeY from Paraburkholderia phytofirmans (strain DSM 17436 / LMG 22146 / PsJN) (Burkholderia phytofirmans).